A 356-amino-acid polypeptide reads, in one-letter code: Uroporphyrinogen decarboxylase (356 aa).

Residues 25–29 (RQAGR), D75, Y152, T207, and H326 each bind substrate.

This sequence belongs to the uroporphyrinogen decarboxylase family. In terms of assembly, homodimer.

It is found in the cytoplasm. It carries out the reaction uroporphyrinogen III + 4 H(+) = coproporphyrinogen III + 4 CO2. It functions in the pathway porphyrin-containing compound metabolism; protoporphyrin-IX biosynthesis; coproporphyrinogen-III from 5-aminolevulinate: step 4/4. Catalyzes the decarboxylation of four acetate groups of uroporphyrinogen-III to yield coproporphyrinogen-III. In Magnetococcus marinus (strain ATCC BAA-1437 / JCM 17883 / MC-1), this protein is Uroporphyrinogen decarboxylase.